Here is a 260-residue protein sequence, read N- to C-terminus: MLFLALGSPWAVELPLCGRRTALCAAAALRGPRASVSRASSSSGPSGPVAGWSTGPSGAARLLRRPGRAQIPVYWEGYVRFLNTPSDKSEDGRLIYTGNMARAVFGVKCFSYSTSLIGLTFLPYIFTQNNAISESVPLPIQIIFYGIMGSFTVITPVLLHFITKGYVIRLYHEATTDTYKAITYNAMLAETSTVFHQNDVKIPDAKHVFTTFYAKTKSLLVNPVLFPNREDYIHLMGYDKEEFILYMEETSEEKRHKDDK.

A mitochondrion-targeting transit peptide spans 1-81 (MLFLALGSPW…PVYWEGYVRF (81 aa)). The Mitochondrial matrix segment spans residues 82 to 102 (LNTPSDKSEDGRLIYTGNMAR). Residues 103–123 (AVFGVKCFSYSTSLIGLTFLP) traverse the membrane as a helical segment. Residues 124-141 (YIFTQNNAISESVPLPIQ) are Mitochondrial intermembrane-facing. The helical transmembrane segment at 142 to 162 (IIFYGIMGSFTVITPVLLHFI) threads the bilayer. Residues 163–260 (TKGYVIRLYH…SEEKRHKDDK (98 aa)) lie on the Mitochondrial matrix side of the membrane.

The protein belongs to the TMEM70 family. As to quaternary structure, homooligomer. Interacts (homooligomer form) with ATP5MC1; this interaction facilitates the oligomer formation of subunit c/ATP5MC1 (c-ring) and the c-ring membrane insertion and also protects ATP5MC1 against intramitochondrial proteolysis. Interacts with the core subunits TMEM126B, NDUFAF1, ECSIT and ACAD9 of the MCIA complex. Interacts with ATP5MC3, TMEM242 and TIMMDC1. In terms of tissue distribution, lower expressed in the heart than in the liver (at protein level).

Its subcellular location is the mitochondrion inner membrane. Scaffold protein that participates in the c-ring assembly of mitochondrial ATP synthase (F(1)F(0) ATP synthase or complex V) by facilitating the membrane insertion and oligomer formation of the subunit c/ATP5MC1 through its interaction. Therefore, participates in the early stage of mitochondrial ATP synthase biogenesis and also protects subunit c/ATP5MC1 against intramitochondrial proteolysis. In addition, binds the mitochondrial proton-transporting ATP synthase complexes I and may play a role in the stability of its membrane-bound subassemblies. The protein is Transmembrane protein 70, mitochondrial of Homo sapiens (Human).